A 190-amino-acid polypeptide reads, in one-letter code: Vacuolar protein sorting-associated protein 29 (190 aa).

Belongs to the VPS29 family. Component of the retromer complex which consists of VPS29 (MAG1), VPS26 (VPS26A or VPS26B), VPS35 (VPS35A or VPS35B or VPS35C), VPS5/17 (SNX1 or SNX2A or SNX2B). Component of a retromer subcomplex consisting of VPS29 (MAG1), VPS26 (VPS26A or VPS26B), VPS35 (VPS35A or VPS35B or VPS35C).

The protein localises to the cytoplasm. It is found in the endosome membrane. The protein resides in the prevacuolar compartment membrane. It localises to the golgi apparatus. Its subcellular location is the trans-Golgi network membrane. The protein localises to the late endosome membrane. In terms of biological role, plays a role in vesicular protein sorting. Component of the membrane-associated retromer complex which is essential in endosome-to-Golgi retrograde transport. Required for the auxin-carrier protein PIN2 sorting to the lytic vacuolar pathway and the PIN1 recycling to the plasma membrane, thus influencing auxin transport orientation. Also involved in the efficient sorting of seed storage proteins globulin 12S and albumin 2S. The VPS29-VPS26-VPS35 subcomplex may be involved in recycling of specific cargos from endosome to the plasma membrane. The polypeptide is Vacuolar protein sorting-associated protein 29 (Arabidopsis thaliana (Mouse-ear cress)).